Here is a 286-residue protein sequence, read N- to C-terminus: 4-diphosphocytidyl-2-C-methyl-D-erythritol kinase (286 aa).

The active site involves K11. 94–104 is an ATP binding site; the sequence is PMGGGIGGGSS. D136 is an active-site residue.

The protein belongs to the GHMP kinase family. IspE subfamily.

It carries out the reaction 4-CDP-2-C-methyl-D-erythritol + ATP = 4-CDP-2-C-methyl-D-erythritol 2-phosphate + ADP + H(+). Its pathway is isoprenoid biosynthesis; isopentenyl diphosphate biosynthesis via DXP pathway; isopentenyl diphosphate from 1-deoxy-D-xylulose 5-phosphate: step 3/6. Its function is as follows. Catalyzes the phosphorylation of the position 2 hydroxy group of 4-diphosphocytidyl-2C-methyl-D-erythritol. The sequence is that of 4-diphosphocytidyl-2-C-methyl-D-erythritol kinase from Pseudomonas putida (strain ATCC 47054 / DSM 6125 / CFBP 8728 / NCIMB 11950 / KT2440).